A 286-amino-acid chain; its full sequence is CDP-diacylglycerol--serine O-phosphatidyltransferase (286 aa).

Helical transmembrane passes span 15-35 (ILPS…IKFA), 74-94 (IDSL…LYVS), 95-115 (MLSK…CVVL), 135-155 (EFFV…LLAL), 167-187 (GWFL…GIPM), and 207-227 (LAIC…VIII).

This sequence belongs to the CDP-alcohol phosphatidyltransferase class-I family.

It localises to the cell membrane. It catalyses the reaction a CDP-1,2-diacyl-sn-glycerol + L-serine = a 1,2-diacyl-sn-glycero-3-phospho-L-serine + CMP + H(+). The sequence is that of CDP-diacylglycerol--serine O-phosphatidyltransferase (pssA) from Mycobacterium tuberculosis (strain ATCC 25618 / H37Rv).